A 323-amino-acid chain; its full sequence is o-succinylbenzoate synthase (323 aa).

Lysine 134 acts as the Proton donor in catalysis. Residues aspartate 162, glutamate 191, and aspartate 214 each coordinate Mg(2+). Lysine 236 functions as the Proton acceptor in the catalytic mechanism.

This sequence belongs to the mandelate racemase/muconate lactonizing enzyme family. MenC type 1 subfamily. A divalent metal cation serves as cofactor.

It catalyses the reaction (1R,6R)-6-hydroxy-2-succinyl-cyclohexa-2,4-diene-1-carboxylate = 2-succinylbenzoate + H2O. The protein operates within quinol/quinone metabolism; 1,4-dihydroxy-2-naphthoate biosynthesis; 1,4-dihydroxy-2-naphthoate from chorismate: step 4/7. It participates in quinol/quinone metabolism; menaquinone biosynthesis. Converts 2-succinyl-6-hydroxy-2,4-cyclohexadiene-1-carboxylate (SHCHC) to 2-succinylbenzoate (OSB). In Yersinia pseudotuberculosis serotype IB (strain PB1/+), this protein is o-succinylbenzoate synthase.